Reading from the N-terminus, the 96-residue chain is (4S)-4-hydroxy-5-phosphonooxypentane-2,3-dione isomerase (96 aa).

An ABM domain is found at 2-91 (HVTLVEINVK…MTGPRKKTVF (90 aa)).

It belongs to the LsrG family. In terms of assembly, homodimer.

The protein localises to the cytoplasm. The enzyme catalyses (2S)-2-hydroxy-3,4-dioxopentyl phosphate = 3-hydroxy-2,4-dioxopentyl phosphate. Its function is as follows. Involved in the degradation of phospho-AI-2, thereby terminating induction of the lsr operon and closing the AI-2 signaling cycle. Catalyzes the conversion of (4S)-4-hydroxy-5-phosphonooxypentane-2,3-dione (P-DPD) to 3-hydroxy-5-phosphonooxypentane-2,4-dione (P-HPD). This Yersinia pseudotuberculosis serotype O:1b (strain IP 31758) protein is (4S)-4-hydroxy-5-phosphonooxypentane-2,3-dione isomerase.